Reading from the N-terminus, the 408-residue chain is Elongation factor Tu, chloroplastic (408 aa).

The tr-type G domain maps to 10–214 (KPHVNIGTIG…AVDSYIPTPK (205 aa)). Residues 19 to 26 (GHVDHGKT) are G1. 19–26 (GHVDHGKT) is a binding site for GTP. Thr26 provides a ligand contact to Mg(2+). Positions 60-64 (GITIN) are G2. The G3 stretch occupies residues 81 to 84 (DCPG). GTP contacts are provided by residues 81–85 (DCPGH) and 136–139 (NKED). The tract at residues 136–139 (NKED) is G4. The interval 174 to 176 (SAL) is G5.

This sequence belongs to the TRAFAC class translation factor GTPase superfamily. Classic translation factor GTPase family. EF-Tu/EF-1A subfamily.

It localises to the plastid. Its subcellular location is the chloroplast. It carries out the reaction GTP + H2O = GDP + phosphate + H(+). Its function is as follows. GTP hydrolase that promotes the GTP-dependent binding of aminoacyl-tRNA to the A-site of ribosomes during protein biosynthesis. The chain is Elongation factor Tu, chloroplastic (tufA) from Chara connivens (Convergent stonewort).